A 1095-amino-acid chain; its full sequence is DNA-directed RNA polymerase subunit beta'' (1095 aa).

4 residues coordinate Zn(2+): Cys220, Cys293, Cys300, and Cys303.

Belongs to the RNA polymerase beta' chain family. RpoC2 subfamily. In plastids the minimal PEP RNA polymerase catalytic core is composed of four subunits: alpha, beta, beta', and beta''. When a (nuclear-encoded) sigma factor is associated with the core the holoenzyme is formed, which can initiate transcription. Zn(2+) serves as cofactor.

It is found in the plastid. The protein localises to the chloroplast. The enzyme catalyses RNA(n) + a ribonucleoside 5'-triphosphate = RNA(n+1) + diphosphate. Functionally, DNA-dependent RNA polymerase catalyzes the transcription of DNA into RNA using the four ribonucleoside triphosphates as substrates. The sequence is that of DNA-directed RNA polymerase subunit beta'' from Zygnema circumcarinatum (Green alga).